Here is a 131-residue protein sequence, read N- to C-terminus: Sec-independent protein translocase protein TatB (131 aa).

A helical membrane pass occupies residues 2 to 22 (FDGIGFMELLLIGILGLVVLG). Polar residues-rich tracts occupy residues 68-83 (ESQG…QDSI) and 116-131 (AEKS…KPNG). The interval 68–131 (ESQGLKNLSP…TGANSDKPNG (64 aa)) is disordered.

This sequence belongs to the TatB family. As to quaternary structure, the Tat system comprises two distinct complexes: a TatABC complex, containing multiple copies of TatA, TatB and TatC subunits, and a separate TatA complex, containing only TatA subunits. Substrates initially bind to the TatABC complex, which probably triggers association of the separate TatA complex to form the active translocon.

It is found in the cell inner membrane. In terms of biological role, part of the twin-arginine translocation (Tat) system that transports large folded proteins containing a characteristic twin-arginine motif in their signal peptide across membranes. Together with TatC, TatB is part of a receptor directly interacting with Tat signal peptides. TatB may form an oligomeric binding site that transiently accommodates folded Tat precursor proteins before their translocation. The protein is Sec-independent protein translocase protein TatB of Shewanella pealeana (strain ATCC 700345 / ANG-SQ1).